The primary structure comprises 79 residues: Cyclotide phyb-A (79 aa).

Positions Met-1–Thr-43 are excised as a propeptide. Positions Gly-44 to Asn-73 form a cross-link, cyclopeptide (Gly-Asn). 3 cysteine pairs are disulfide-bonded: Cys-47–Cys-63, Cys-51–Cys-65, and Cys-56–Cys-70. Residues Gly-74 to Lys-79 constitute a propeptide that is removed on maturation.

In terms of processing, this is a cyclic peptide. Contains 3 disulfide bonds. In terms of tissue distribution, expressed in midvein, lamina and periphery of leaves (at protein level).

Functionally, probably participates in a plant defense mechanism. This Petunia hybrida (Petunia) protein is Cyclotide phyb-A.